A 593-amino-acid chain; its full sequence is High affinity cGMP-specific 3',5'-cyclic phosphodiesterase 9A (593 aa).

The segment at 87–141 (SAGVEDKRTTSRGQSAERPLRDRRVVGLEQPRREGAFESGQVEPRPREPQGCYQE) is disordered. The segment covering 104 to 122 (RPLRDRRVVGLEQPRREGA) has biased composition (basic and acidic residues). In terms of domain architecture, PDEase spans 236-557 (PRRDVPTYPK…DRYEELKRID (322 aa)). His312 (proton donor) is an active-site residue. 312 to 316 (HNFRH) provides a ligand contact to 3',5'-cyclic GMP. Zn(2+)-binding residues include His316, His352, and Asp353. Asp353 lines the 3',5'-cyclic GMP pocket. Asp353 contacts Mg(2+). Ser379 is modified (phosphoserine). 3',5'-cyclic GMP-binding positions include Asp462, Tyr484, and 512 to 513 (AQ). Asp462 is a Zn(2+) binding site. Residues 564–593 (QKKTDSLTSGATEKSRERSRDVKNSEGDCA) are disordered. Residues 576 to 593 (EKSRERSRDVKNSEGDCA) show a composition bias toward basic and acidic residues.

Belongs to the cyclic nucleotide phosphodiesterase family. PDE9 subfamily. As to quaternary structure, homodimer. Zn(2+) is required as a cofactor. The cofactor is Mg(2+). Expressed in all tissues examined (testis, brain, small intestine, skeletal muscle, heart, lung, thymus, spleen, placenta, kidney, liver, pancreas, ovary and prostate) except blood. Highest levels in brain, heart, kidney, spleen, prostate and colon. Isoform PDE9A12 is found in prostate. In brain, present in the cortex, cerebellum, and subiculum (at protein level). In heart, primarily localizes to myocytes.

The protein localises to the cell projection. The protein resides in the ruffle membrane. It localises to the cytoplasm. It is found in the perinuclear region. Its subcellular location is the golgi apparatus. The protein localises to the endoplasmic reticulum. The protein resides in the cell membrane. It localises to the sarcolemma. It catalyses the reaction 3',5'-cyclic GMP + H2O = GMP + H(+). It functions in the pathway purine metabolism; 3',5'-cyclic GMP degradation; GMP from 3',5'-cyclic GMP: step 1/1. Inhibited by zaprinast; inhibitor is however not specific to PDE9A. Specifically inhibited by BAY-73-6691 (1-(2-chlorophenyl)-6-((2R)-3,3,3- trifluoro-2-methylpropyl)-1,5-dihydro-4H-pyrazolo(3,4-d)pyrimidine-4-one). BAY-73-9961 has two enantiomers, (R) and (S), due to the presence of a chiral center, and both forms vary in their pattern of interaction. Specifically inhibited by PF-4181366 (4H-Pyrazolo[3,4-d]pyrimidin-4-one, 1- cyclopentyl-1,5-dihydro-6-[(3S,4S)-4-methyl- 1-(6-quinoxalinylmethyl)-3-pyrrolidinyl]-one). Specifically inhibited by PF-4449613 ((R)-6-(1-(3-phenoxyazetidin-1-yl)ethyl)-1-(tetrahydro-2H-pyran-4-yl)-1H-pyrazolo[3,4-d]pyrimidin- 4(5H)-one). Specifically inhibited by inhibitor 28 (2-((1-(2-Chlorophenyl)-4-hydroxy-1Hpyrazolo[ 3,4-d]pyrimidin-6-yl)amino)-N-(4- methoxyphenyl)propanamide): inhibitor forms a hydrogen bond with Tyr-484 and Gln-513. Specifically inhibited by 1-Cyclopentyl-6-[(1r)-1-(3-phenoxyazetidin- 1-Yl)ethyl]-1,5-dihydro-4h-pyrazolo[3,4-D] pyrimidin-4-one: inhibitor forms a hydrogen bond with Tyr-484 and Gln-513. Functionally, specifically hydrolyzes the second messenger cGMP, which is a key regulator of many important physiological processes. Highly specific: compared to other members of the cyclic nucleotide phosphodiesterase family, has the highest affinity and selectivity for cGMP. Specifically regulates natriuretic-peptide-dependent cGMP signaling in heart, acting as a regulator of cardiac hypertrophy in myocytes and muscle. Does not regulate nitric oxide-dependent cGMP in heart. Additional experiments are required to confirm whether its ability to hydrolyze natriuretic-peptide-dependent cGMP is specific to heart or is a general feature of the protein. In brain, involved in cognitive function, such as learning and long-term memory. This is High affinity cGMP-specific 3',5'-cyclic phosphodiesterase 9A from Homo sapiens (Human).